The following is a 220-amino-acid chain: NADH-quinone oxidoreductase subunit I (220 aa).

2 consecutive 4Fe-4S ferredoxin-type domains span residues 71 to 102 (LQRLLDSGSERCIGCGLCEKICTSNCIRIITH) and 112 to 141 (DSYTINLGRCIYCGLCAEVCPELAIVMGNR). The [4Fe-4S] cluster site is built by C82, C85, C88, C92, C121, C124, C127, and C131. The interval 187 to 220 (MQATPLDYVQEPSKEESKEESPTSPESHKGDENV) is disordered. Residues 198–220 (PSKEESKEESPTSPESHKGDENV) show a composition bias toward basic and acidic residues.

Belongs to the complex I 23 kDa subunit family. NDH-1 is composed of 14 different subunits. Subunits NuoA, H, J, K, L, M, N constitute the membrane sector of the complex. It depends on [4Fe-4S] cluster as a cofactor.

The protein localises to the cell inner membrane. The enzyme catalyses a quinone + NADH + 5 H(+)(in) = a quinol + NAD(+) + 4 H(+)(out). In terms of biological role, NDH-1 shuttles electrons from NADH, via FMN and iron-sulfur (Fe-S) centers, to quinones in the respiratory chain. The immediate electron acceptor for the enzyme in this species is believed to be ubiquinone. Couples the redox reaction to proton translocation (for every two electrons transferred, four hydrogen ions are translocated across the cytoplasmic membrane), and thus conserves the redox energy in a proton gradient. The chain is NADH-quinone oxidoreductase subunit I from Helicobacter pylori (strain J99 / ATCC 700824) (Campylobacter pylori J99).